The chain runs to 210 residues: Calcineurin B-like protein 4 (210 aa).

A lipid anchor (N-myristoyl glycine) is attached at glycine 2. EF-hand domains are found at residues 31 to 66 (EVEA…RNSR), 67 to 102 (KANL…FHPK), 104 to 139 (PKSE…LLDE), and 148 to 183 (AVEA…NPAS). Ca(2+) is bound by residues aspartate 161, asparagine 163, aspartate 165, arginine 167, and glutamate 172.

This sequence belongs to the calcineurin regulatory subunit family. As to quaternary structure, homodimer. Interacts with CIPK24. As to expression, expressed in leaves.

The protein localises to the cell membrane. Acts as a calcium sensor involved in the regulatory pathway for the control of intracellular Na(+) and K(+) homeostasis and salt tolerance. Operates in synergy with CIPK24 to activate the plasma membrane Na(+)/H(+) antiporter SOS1. May function as positive regulator of salt stress responses. CBL proteins interact with CIPK serine-threonine protein kinases. Binding of a CBL protein to the regulatory NAF domain of a CIPK protein lead to the activation of the kinase in a calcium-dependent manner. This chain is Calcineurin B-like protein 4 (CBL4), found in Oryza sativa subsp. japonica (Rice).